Here is a 198-residue protein sequence, read N- to C-terminus: Large ribosomal subunit protein bL25 (198 aa).

Belongs to the bacterial ribosomal protein bL25 family. CTC subfamily. As to quaternary structure, part of the 50S ribosomal subunit; part of the 5S rRNA/L5/L18/L25 subcomplex. Contacts the 5S rRNA. Binds to the 5S rRNA independently of L5 and L18.

In terms of biological role, this is one of the proteins that binds to the 5S RNA in the ribosome where it forms part of the central protuberance. The polypeptide is Large ribosomal subunit protein bL25 (Chlorobium phaeobacteroides (strain DSM 266 / SMG 266 / 2430)).